Reading from the N-terminus, the 192-residue chain is Mediator of RNA polymerase II transcription subunit 29 (192 aa).

The disordered stretch occupies residues 32–51; that stretch reads MQQQSPQQMQPAPVPQQTQQ.

This sequence belongs to the Mediator complex subunit 29 family. In terms of assembly, component of the Mediator complex.

The protein resides in the nucleus. Component of the Mediator complex, a coactivator involved in the regulated transcription of nearly all RNA polymerase II-dependent genes. Mediator functions as a bridge to convey information from gene-specific regulatory proteins to the basal RNA polymerase II transcription machinery. Mediator is recruited to promoters by direct interactions with regulatory proteins and serves as a scaffold for the assembly of a functional preinitiation complex with RNA polymerase II and the general transcription factors. The chain is Mediator of RNA polymerase II transcription subunit 29 (ix) from Bombyx mori (Silk moth).